A 217-amino-acid polypeptide reads, in one-letter code: 3,4-dihydroxy-2-butanone 4-phosphate synthase (217 aa).

Residues 37 to 38 (RE), aspartate 42, 150 to 154 (RGGHT), and glutamate 174 contribute to the D-ribulose 5-phosphate site. Residue glutamate 38 coordinates Mg(2+). Residue histidine 153 coordinates Mg(2+).

Belongs to the DHBP synthase family. Homodimer. Mg(2+) is required as a cofactor. The cofactor is Mn(2+).

The enzyme catalyses D-ribulose 5-phosphate = (2S)-2-hydroxy-3-oxobutyl phosphate + formate + H(+). Its pathway is cofactor biosynthesis; riboflavin biosynthesis; 2-hydroxy-3-oxobutyl phosphate from D-ribulose 5-phosphate: step 1/1. Its function is as follows. Catalyzes the conversion of D-ribulose 5-phosphate to formate and 3,4-dihydroxy-2-butanone 4-phosphate. In Proteus mirabilis (strain HI4320), this protein is 3,4-dihydroxy-2-butanone 4-phosphate synthase.